The sequence spans 204 residues: Threonylcarbamoyl-AMP synthase (204 aa).

The 195-residue stretch at 10–204 folds into the YrdC-like domain; it reads ADELDLVANY…KDLLAGHILR (195 aa).

The protein belongs to the SUA5 family. TsaC subfamily.

It localises to the cytoplasm. The catalysed reaction is L-threonine + hydrogencarbonate + ATP = L-threonylcarbamoyladenylate + diphosphate + H2O. Required for the formation of a threonylcarbamoyl group on adenosine at position 37 (t(6)A37) in tRNAs that read codons beginning with adenine. Catalyzes the conversion of L-threonine, HCO(3)(-)/CO(2) and ATP to give threonylcarbamoyl-AMP (TC-AMP) as the acyladenylate intermediate, with the release of diphosphate. The polypeptide is Threonylcarbamoyl-AMP synthase (Moraxella catarrhalis (strain BBH18)).